The chain runs to 239 residues: Ribonuclease PH (239 aa).

Phosphate is bound by residues Arg87 and 125–127; that span reads GTR.

The protein belongs to the RNase PH family. Homohexameric ring arranged as a trimer of dimers.

It carries out the reaction tRNA(n+1) + phosphate = tRNA(n) + a ribonucleoside 5'-diphosphate. In terms of biological role, phosphorolytic 3'-5' exoribonuclease that plays an important role in tRNA 3'-end maturation. Removes nucleotide residues following the 3'-CCA terminus of tRNAs; can also add nucleotides to the ends of RNA molecules by using nucleoside diphosphates as substrates, but this may not be physiologically important. Probably plays a role in initiation of 16S rRNA degradation (leading to ribosome degradation) during starvation. In Syntrophomonas wolfei subsp. wolfei (strain DSM 2245B / Goettingen), this protein is Ribonuclease PH.